The following is a 136-amino-acid chain: uncharacterized protein (136 aa).

This is an uncharacterized protein from Enterobacteria phage T4 (Bacteriophage T4).